We begin with the raw amino-acid sequence, 365 residues long: Annexin B22 (365 aa).

Annexin repeat units lie at residues 34–105 (FSAS…QLIV), 106–185 (DTPY…SLVQ), 211–283 (ELAE…AVLR), and 287–358 (DRPS…VLMG). Residues Met-47, Gly-49, Gly-51, Thr-52, Glu-54, Asp-91, Met-119, Gly-121, Gly-123, Asp-126, Lys-169, Glu-171, Thr-172, Glu-177, Asp-273, Met-300, Gly-302, Leu-303, Gly-304, and Asp-344 each coordinate Ca(2+).

Belongs to the annexin family. In terms of assembly, homodimer.

The protein localises to the tegument. It localises to the secreted. It is found in the extracellular exosome. Its subcellular location is the host cell. In terms of biological role, involved in reproduction of the worm. Involved in host-parasite interaction. Delivered into the host cell by means of parasite exosomes. Binds to acidic phospholipid membranes in a calcium-dependent manner in vitro. Causes aggregation of liposomes in the presence of calcium, but not in its absence. Likely to promote membrane fusion. May provide structural integrity within the tegument. The protein is Annexin B22 of Schistosoma mansoni (Blood fluke).